An 823-amino-acid polypeptide reads, in one-letter code: ATP-dependent DNA helicase At3g02060, chloroplastic (823 aa).

A chloroplast-targeting transit peptide spans 1–53 (MMSLLPNPDPITVPLVLKLCSFPPPRRLFSLRLRRFTRKSSSLLPLVAVSSLS). Positions 285-447 (LTERETPMDR…LTGFRDASLI (163 aa)) constitute a Helicase ATP-binding domain. 298 to 305 (GDVGFGKT) contributes to the ATP binding site. Positions 400–403 (DEEQ) match the DEEQ box motif. One can recognise a Helicase C-terminal domain in the interval 465–622 (RKEKVIEAIK…GFQLAEKDMG (158 aa)).

Belongs to the helicase family.

The protein localises to the plastid. It is found in the chloroplast. The catalysed reaction is ATP + H2O = ADP + phosphate + H(+). This chain is ATP-dependent DNA helicase At3g02060, chloroplastic, found in Arabidopsis thaliana (Mouse-ear cress).